The chain runs to 737 residues: Catalase-peroxidase (737 aa).

Residues 1 to 29 (MTDSPDATTGGCPVAHGDRLPHPTQGGAN) are disordered. A cross-link (tryptophyl-tyrosyl-methioninium (Trp-Tyr) (with M-253)) is located at residues 101–227 (WHSAGTYRVS…LGATHMGLIY (127 aa)). The active-site Proton acceptor is histidine 102. Positions 227–253 (YVNPEGPEGKPDPVAAARDIRETFGRM) form a cross-link, tryptophyl-tyrosyl-methioninium (Tyr-Met) (with W-101). Residue histidine 268 participates in heme b binding.

Belongs to the peroxidase family. Peroxidase/catalase subfamily. As to quaternary structure, homodimer or homotetramer. Heme b serves as cofactor. In terms of processing, formation of the three residue Trp-Tyr-Met cross-link is important for the catalase, but not the peroxidase activity of the enzyme.

It carries out the reaction H2O2 + AH2 = A + 2 H2O. The enzyme catalyses 2 H2O2 = O2 + 2 H2O. Its function is as follows. Bifunctional enzyme with both catalase and broad-spectrum peroxidase activity. This Saccharopolyspora erythraea (strain ATCC 11635 / DSM 40517 / JCM 4748 / NBRC 13426 / NCIMB 8594 / NRRL 2338) protein is Catalase-peroxidase.